Reading from the N-terminus, the 672-residue chain is APC membrane recruitment protein 2 (672 aa).

Positions 1–21 are enriched in gly residues; it reads METGRSRGGGAAVSERGGGAR. Disordered regions lie at residues 1 to 23, 74 to 360, and 443 to 560; these read METG…ARAG, TMPS…DPSA, and MLSQ…DALC. Over residues 142–158 the composition is skewed to low complexity; it reads GSLASSSVAKSHSFFSL. S154 is modified (phosphoserine). Basic and acidic residues-rich tracts occupy residues 163–175 and 201–210; these read GRSE…HAEA and RGKEEEEKAV. A phosphoserine mark is found at S223, S227, and S244. The segment covering 230–254 has biased composition (basic and acidic residues); the sequence is CVKEEPPRAARRPDSPGQDASRHAA. Positions 255–269 are enriched in low complexity; sequence GEPAGGEQAPASAES. S284 is modified (phosphoserine). Positions 289–303 are enriched in basic and acidic residues; sequence SRGEDAEGHRREEKP. A compositionally biased stretch (low complexity) spans 343–354; sequence ASAVPDPSSVDP. Phosphoserine is present on residues S356 and S359. Residues 446 to 457 show a composition bias toward low complexity; sequence QTEDQGQGTQEG. 2 stretches are compositionally biased toward basic and acidic residues: residues 478–488 and 502–516; these read RCGEAAKDMSS and QQKE…EHQE.

This sequence belongs to the Amer family. Interacts with APC.

The protein localises to the cell membrane. Negative regulator of the canonical Wnt signaling pathway involved in neuroectodermal patterning. Acts by specifically binding phosphatidylinositol 4,5-bisphosphate (PtdIns(4,5)P2), translocating to the cell membrane and interacting with key regulators of the canonical Wnt signaling pathway, such as components of the beta-catenin destruction complex. This Mus musculus (Mouse) protein is APC membrane recruitment protein 2 (Amer2).